The chain runs to 274 residues: Protein FRG1 homolog (274 aa).

The Nuclear localization signal signature appears at 20–36 (KKNLFKVGKEKKKKNKD). Residues 27 to 46 (GKEKKKKNKDDKEKIDPDTV) form a disordered region. Basic and acidic residues predominate over residues 34-43 (NKDDKEKIDP). Residues 252–268 (QADGSAHELLLDRRMKM) carry the Bipartite nuclear localization signal motif.

The protein belongs to the FRG1 family.

The protein resides in the nucleus. Its subcellular location is the cajal body. It is found in the nucleolus. The protein localises to the cytoplasm. Its function is as follows. Binds to mRNA in a sequence-independent manner. May play a role in regulation of pre-mRNA splicing or in the assembly of rRNA into ribosomal subunits. May be involved in mRNA transport. May be involved in epigenetic regulation of muscle differentiation through regulation of activity of the histone-lysine N-methyltransferase KMT5B. In Caenorhabditis elegans, this protein is Protein FRG1 homolog (frg-1).